We begin with the raw amino-acid sequence, 238 residues long: Opacity protein opA60 (238 aa).

Alanine 1 is a signal peptide.

The protein belongs to the opacity porin family.

The protein resides in the cell outer membrane. Its function is as follows. Implicated in a number of adherence functions. OPA proteins are implicated in pathogenesis and are subject to phase variation. This is Opacity protein opA60 (opaH) from Neisseria gonorrhoeae.